The sequence spans 476 residues: Cysteine--tRNA ligase (476 aa).

Zn(2+) is bound at residue cysteine 29. Positions proline 31–histidine 41 match the 'HIGH' region motif. Positions 209, 234, and 238 each coordinate Zn(2+). The 'KMSKS' region motif lies at lysine 266–serine 270. Lysine 269 is an ATP binding site.

This sequence belongs to the class-I aminoacyl-tRNA synthetase family. Zn(2+) serves as cofactor.

It is found in the cytoplasm. It catalyses the reaction tRNA(Cys) + L-cysteine + ATP = L-cysteinyl-tRNA(Cys) + AMP + diphosphate. The protein is Cysteine--tRNA ligase (cysS) of Pyrococcus horikoshii (strain ATCC 700860 / DSM 12428 / JCM 9974 / NBRC 100139 / OT-3).